The following is a 413-amino-acid chain: MAKYEKLIPRFLEYITTETRSDENATTIPSTQTQVVFLHKLMDDLKEIGLSDVKYNEKNGYVTALLPSNIDKKVPTMGFLSHVDTADFNAKGVNPQTIENYDGESIIKLDEAGQFVLDPKEFPNMKNYKGQTLITTDGSTLLGSDDKSGVAEIITAMDYFIQHPEIKHGDIKIGLGPDEEIGTGADHFDAEDFATDFAYTMDGGPIGQLEYETFNAAAMKVDIQGKNVHPSEAKDIMINALQVAVDFQDAFPRDEVPEKTDGRQGFYHLLSLDGTVDEAHMAYIIRDFDRDGLETRKAFAAKVAEDMNAKYGEGRVKATIKDQYYNMAEVLKDHMDVVDLAKDAMEAIDIKPLIEPVRGGTDGSKISFMGIPTPNIFAGAENMHGRYEFVSVQTMEKAVDTMIKMNELNVERN.

A Zn(2+)-binding site is contributed by H82. Residue D84 is part of the active site. Position 145 (D145) interacts with Zn(2+). The active-site Proton acceptor is E179. The Zn(2+) site is built by E180, D202, and H384.

The protein belongs to the peptidase M20B family. Zn(2+) is required as a cofactor.

It is found in the cytoplasm. The catalysed reaction is Release of the N-terminal residue from a tripeptide.. Functionally, cleaves the N-terminal amino acid of tripeptides. The chain is Peptidase T from Latilactobacillus sakei subsp. sakei (strain 23K) (Lactobacillus sakei subsp. sakei).